Consider the following 273-residue polypeptide: Putative ankyrin repeat protein RBE_0317 (273 aa).

ANK repeat units follow at residues 31-60 (LGKEIFPIATFFDKNDIIRTLMEEKIDFYS), 93-123 (NGNTLLHAAIDQGKSEVVKFLTSYKNLEVNT), 127-157 (GGNSPLHLAIKSNNPEIVEMLLSYENINVNE), 161-191 (YGDTTLHKAIRSYNHKIIEMLLLREEIDVNE), and 195-225 (QGETPLHGAVKSNRPEIVKMLLSHKNMDTKQ).

This is Putative ankyrin repeat protein RBE_0317 from Rickettsia bellii (strain RML369-C).